We begin with the raw amino-acid sequence, 477 residues long: Fibrinogen beta chain (477 aa).

A disordered region spans residues 1–76 (EDLSLVGQPE…ASPRPQEAQK (76 aa)). Position 13 is a sulfotyrosine (Tyr13). Residue Asn27 is glycosylated (N-linked (GlcNAc...) asparagine). Residues 44–55 (RVRRPPLRHRRL) are compositionally biased toward basic residues. Cystine bridges form between Cys220/Cys304, Cys230/Cys259, and Cys412/Cys425. One can recognise a Fibrinogen C-terminal domain in the interval 221–476 (RVPVVSGMHC…QMAMKLRPKW (256 aa)).

In terms of assembly, heterohexamer; disulfide linked. Contains 2 sets of 3 non-identical chains (alpha, beta and gamma). The 2 heterotrimers are in head to head conformation with the N-termini in a small central domain. Post-translationally, conversion of fibrinogen to fibrin is triggered by thrombin, which cleaves fibrinopeptides A and B from alpha and beta chains, and thus exposes the N-terminal polymerization sites responsible for the formation of the soft clot. The soft clot is converted into the hard clot by factor XIIIA which catalyzes the epsilon-(gamma-glutamyl)lysine cross-linking between gamma chains (stronger) and between alpha chains (weaker) of different monomers.

The protein resides in the secreted. Functionally, fibrinogen has a double function: yielding monomers that polymerize into fibrin and acting as a cofactor in platelet aggregation. The polypeptide is Fibrinogen beta chain (Petromyzon marinus (Sea lamprey)).